A 167-amino-acid chain; its full sequence is Cell number regulator 3 (167 aa).

The chain crosses the membrane as a helical span at residues 67–84 (GMTSCGTSAALFALIQWL).

This sequence belongs to the cornifelin family. In terms of tissue distribution, expressed only in pollen.

It is found in the membrane. This chain is Cell number regulator 3 (CNR3), found in Zea mays (Maize).